A 321-amino-acid chain; its full sequence is MLFATLEHILTHISFSTISIVITIHLITLLVRELRGLRDSSEKGMIATFFSITGFLVSRWVSSGHFPLSNLYESLIFLSWTLYILHTIPKIQNSKNDLSTITTPSTILTQGFATSGLLTEMHQSTILVPALQSQWLMMHVSMMLLSYATLLCGSLLSAALLIIRFRKNFDFFSLKKNVFLKTFFFSEIEYLYAKRSALKNTSFPVFPNYYKYQLTERLDSWSYRVISLGFTLLTVGILCGAVWANEAWGSYWNWDPKETWAFITWTIFAIYLHSRKNPNWKGTNSALVASIGFLIIWICYFGINLLGIGLHSYGSFTLPSK.

7 helical membrane passes run 9 to 29 (ILTH…LITL), 44 to 64 (GMIA…VSSG), 68 to 88 (LSNL…LHTI), 143 to 163 (MLLS…LLII), 225 to 245 (VISL…VWAN), 259 to 273 (TWAF…IYLH), and 288 to 308 (VASI…LLGI).

The protein belongs to the CcmF/CycK/Ccl1/NrfE/CcsA family. In terms of assembly, may interact with Ccs1.

It localises to the plastid. The protein localises to the chloroplast thylakoid membrane. In terms of biological role, required during biogenesis of c-type cytochromes (cytochrome c6 and cytochrome f) at the step of heme attachment. This Zea mays (Maize) protein is Cytochrome c biogenesis protein CcsA.